We begin with the raw amino-acid sequence, 267 residues long: uncharacterized protein (267 aa).

Residues 72 to 267 (LTENNNNNNT…EEKKKKKKKK (196 aa)) form a disordered region. A compositionally biased stretch (low complexity) spans 122 to 145 (DSVSSSTTTTIITNNKKINNNNNN). The span at 159–175 (ENEKSVQKSKKEKESPK) shows a compositional bias: basic and acidic residues. Residues 194–218 (SESSSSSSSSSSSESSSSESESSSS) show a composition bias toward low complexity.

This is an uncharacterized protein from Dictyostelium discoideum (Social amoeba).